A 117-amino-acid polypeptide reads, in one-letter code: UPF0342 protein LEUM_1212 (117 aa).

This sequence belongs to the UPF0342 family.

The polypeptide is UPF0342 protein LEUM_1212 (Leuconostoc mesenteroides subsp. mesenteroides (strain ATCC 8293 / DSM 20343 / BCRC 11652 / CCM 1803 / JCM 6124 / NCDO 523 / NBRC 100496 / NCIMB 8023 / NCTC 12954 / NRRL B-1118 / 37Y)).